A 137-amino-acid polypeptide reads, in one-letter code: Small ribosomal subunit protein uS9 (137 aa).

The disordered stretch occupies residues 105–137 (LKAEGYLTRDPRAKERKKYGLHKARKAPQYSKR). Residues 118-137 (KERKKYGLHKARKAPQYSKR) are compositionally biased toward basic residues.

It belongs to the universal ribosomal protein uS9 family.

The sequence is that of Small ribosomal subunit protein uS9 (rpsI) from Synechocystis sp. (strain ATCC 27184 / PCC 6803 / Kazusa).